We begin with the raw amino-acid sequence, 357 residues long: MDDLKQKYLSQIAAAQDEAGLEAIRLAAVGKKGEVALKMRELGKMTPEERQVAGPALNALKDEINSALAAKKAGLADAALDARLRDEWLDVTLPARGRPRGTIHPVSQVTEEVTAIFGEMGFSVAEGPRIDTDWYNFDALNIPGHHPARAEMDTFYMTRAEGDDRPPHVLRTHTSPVQIRTMEAQGAPLRIICPGGVYRADYDQTHTPMFHQVEGLAIDKDISMANLKWVLEEFFAAFFEIDGIKTRFRASHFPFTEPSAEVDIQCSWIDGQLRIGEGDDWLEVLGSGMVHPKVLAAGGIDPDQWQGFAFGMGIDRIAMLKYGIPDLRAFFDSDLRWLRHYGFASLDQPTLHGGLSR.

Position 257 (Glu257) interacts with Mg(2+).

It belongs to the class-II aminoacyl-tRNA synthetase family. Phe-tRNA synthetase alpha subunit type 1 subfamily. As to quaternary structure, tetramer of two alpha and two beta subunits. The cofactor is Mg(2+).

It localises to the cytoplasm. It carries out the reaction tRNA(Phe) + L-phenylalanine + ATP = L-phenylalanyl-tRNA(Phe) + AMP + diphosphate + H(+). In Roseobacter denitrificans (strain ATCC 33942 / OCh 114) (Erythrobacter sp. (strain OCh 114)), this protein is Phenylalanine--tRNA ligase alpha subunit.